Reading from the N-terminus, the 353-residue chain is Photosystem II D2 protein (353 aa).

T2 carries the post-translational modification N-acetylthreonine. Phosphothreonine is present on T2. A helical membrane pass occupies residues 41-61 (CAYFALGGWFTGTTFVTSWYT). H118 is a binding site for chlorophyll a. The helical transmembrane segment at 125 to 141 (GFMLRQFELARSVQLRP) threads the bilayer. Q130 and N143 together coordinate pheophytin a. A helical transmembrane segment spans residues 153 to 166 (VFVSVFLIYPLGQS). H198 is a binding site for chlorophyll a. The helical transmembrane segment at 208–228 (AALLCAIHGATVENTLFEDGD) threads the bilayer. 2 residues coordinate a plastoquinone: H215 and F262. Residue H215 coordinates Fe cation. H269 is a binding site for Fe cation. Residues 279–295 (GLWMSALGVVGLALNLR) form a helical membrane-spanning segment.

Belongs to the reaction center PufL/M/PsbA/D family. PSII is composed of 1 copy each of membrane proteins PsbA, PsbB, PsbC, PsbD, PsbE, PsbF, PsbH, PsbI, PsbJ, PsbK, PsbL, PsbM, PsbT, PsbX, PsbY, PsbZ, Psb30/Ycf12, at least 3 peripheral proteins of the oxygen-evolving complex and a large number of cofactors. It forms dimeric complexes. Requires The D1/D2 heterodimer binds P680, chlorophylls that are the primary electron donor of PSII, and subsequent electron acceptors. It shares a non-heme iron and each subunit binds pheophytin, quinone, additional chlorophylls, carotenoids and lipids. There is also a Cl(-1) ion associated with D1 and D2, which is required for oxygen evolution. The PSII complex binds additional chlorophylls, carotenoids and specific lipids. as cofactor.

It is found in the plastid. The protein localises to the chloroplast thylakoid membrane. The catalysed reaction is 2 a plastoquinone + 4 hnu + 2 H2O = 2 a plastoquinol + O2. In terms of biological role, photosystem II (PSII) is a light-driven water:plastoquinone oxidoreductase that uses light energy to abstract electrons from H(2)O, generating O(2) and a proton gradient subsequently used for ATP formation. It consists of a core antenna complex that captures photons, and an electron transfer chain that converts photonic excitation into a charge separation. The D1/D2 (PsbA/PsbD) reaction center heterodimer binds P680, the primary electron donor of PSII as well as several subsequent electron acceptors. D2 is needed for assembly of a stable PSII complex. In Olimarabidopsis pumila (Dwarf rocket), this protein is Photosystem II D2 protein.